Reading from the N-terminus, the 223-residue chain is Fibronectin type III domain-containing protein 10 (223 aa).

The N-terminal stretch at 1 to 19 (MRAPPLLLLLAACAPPSGA) is a signal peptide. At 20–179 (AVDPTPPGWE…FTAEPAAMQE (160 aa)) the chain is on the extracellular side. Residues 72-168 (LASAGGSLRA…VVPPELAECV (97 aa)) form the Fibronectin type-III domain. N86 and N109 each carry an N-linked (GlcNAc...) asparagine glycan. Residues 180 to 200 (IVVAMTAVGGSICVMLVVICL) traverse the membrane as a helical segment. Topologically, residues 201 to 223 (LVAYITENLMHPTFRRPSLRRQP) are cytoplasmic.

Its subcellular location is the membrane. This Mus musculus (Mouse) protein is Fibronectin type III domain-containing protein 10 (Fndc10).